We begin with the raw amino-acid sequence, 386 residues long: Heavy metal-associated isoprenylated plant protein 5 (386 aa).

The segment covering 1–16 has biased composition (basic and acidic residues); that stretch reads MGEVQEGPKVEQEKKP. Residues 1-40 are disordered; the sequence is MGEVQEGPKVEQEKKPAATVVPVETTDGKPKSGGGDSAAA. In terms of domain architecture, HMA 1 spans 49 to 112; it reads VSAFVYKVDM…KLEEKTKRKV (64 aa). Residues Cys-60 and Cys-63 each coordinate a metal cation. The disordered stretch occupies residues 129-153; sequence VGEKKADGGDKEAAPPAPAPAAPKE. The span at 130–141 shows a compositional bias: basic and acidic residues; the sequence is GEKKADGGDKEA. One can recognise an HMA 2 domain in the interval 153 to 220; the sequence is ESVVPLKIRL…KLKRTVEPLV (68 aa). The a metal cation site is built by Cys-164 and Cys-167. Composition is skewed to basic and acidic residues over residues 223–245 and 252–297; these read KKDDGAAENKKTEAAAPDAKKEA and EAKK…KKDG. Residues 223 to 301 form a disordered region; it reads KKDDGAAENK…EKKKDGGGVP (79 aa). A Cysteine methyl ester modification is found at Cys-383. Cys-383 carries the S-farnesyl cysteine lipid modification. Residues 384 to 386 constitute a propeptide, removed in mature form; it reads SVM.

This sequence belongs to the HIPP family. In terms of processing, efficiently farnesylated in vitro.

Heavy-metal-binding protein. Involved in disease resistance. In Arabidopsis thaliana (Mouse-ear cress), this protein is Heavy metal-associated isoprenylated plant protein 5.